The following is a 371-amino-acid chain: Cytochrome b (371 aa).

4 helical membrane passes run 25 to 45 (FGSMLLTCTALQISTGFFLAV), 69 to 90 (WIMQNLHAIGASLFFLCIYIHI), 105 to 125 (WLSGTTLLIILMATAFFGYVL), and 170 to 190 (FFALHFILPFLITSLSSIHII). Heme b contacts are provided by histidine 75 and histidine 89. The heme b site is built by histidine 174 and histidine 188. Histidine 193 is an a ubiquinone binding site. A run of 4 helical transmembrane segments spans residues 218 to 238 (YKDMFMISSMITLLFIVLSFM), 280 to 300 (LGGTLALLMSVIILTTTPFTH), 312 to 332 (LTQALFWTLIATFITITWTAT), and 339 to 358 (FTLISQVASVTYFSFFIINP).

The protein belongs to the cytochrome b family. In terms of assembly, the cytochrome bc1 complex contains 3 respiratory subunits (MT-CYB, CYC1 and UQCRFS1), 2 core proteins (UQCRC1 and UQCRC2) and probably 6 low-molecular weight proteins. Requires heme b as cofactor.

It localises to the mitochondrion inner membrane. Component of the ubiquinol-cytochrome c reductase complex (complex III or cytochrome b-c1 complex) that is part of the mitochondrial respiratory chain. The b-c1 complex mediates electron transfer from ubiquinol to cytochrome c. Contributes to the generation of a proton gradient across the mitochondrial membrane that is then used for ATP synthesis. The sequence is that of Cytochrome b (MT-CYB) from Toxicocalamus preussi (Preuss's forest snake).